The chain runs to 96 residues: Muconolactone Delta-isomerase 1 (96 aa).

This sequence belongs to the muconolactone Delta-isomerase family. Homodecamer.

It carries out the reaction (S)-muconolactone = (4,5-dihydro-5-oxofuran-2-yl)-acetate. It participates in aromatic compound metabolism; beta-ketoadipate pathway; 5-oxo-4,5-dihydro-2-furylacetate from catechol: step 3/3. This chain is Muconolactone Delta-isomerase 1 (catC1), found in Acinetobacter lwoffii.